The sequence spans 139 residues: Natriuretic peptides A (139 aa).

A signal peptide spans 1-21 (MTALVLWGLLLLLGQHTQVNS). Residues 22–114 (HVLGRPFSAS…QDLLMSLRKR (93 aa)) constitute a propeptide that is removed on maturation. A disulfide bridge connects residues cysteine 118 and cysteine 134.

Belongs to the natriuretic peptide family.

It localises to the secreted. In terms of biological role, hormone playing a key role in cardiovascular homeostasis through regulation of natriuresis, diuresis, and vasodilation. Has a cGMP-stimulating activity. The polypeptide is Natriuretic peptides A (nppa) (Takifugu rubripes (Japanese pufferfish)).